A 116-amino-acid chain; its full sequence is Probable prefoldin subunit 2 (116 aa).

The protein belongs to the prefoldin subunit beta family. Heterohexamer of two PFD-alpha type and four PFD-beta type subunits.

Its function is as follows. Binds specifically to cytosolic chaperonin (c-CPN) and transfers target proteins to it. Binds to nascent polypeptide chain and promotes folding in an environment in which there are many competing pathways for nonnative proteins. This chain is Probable prefoldin subunit 2 (pfdn2), found in Dictyostelium discoideum (Social amoeba).